The primary structure comprises 197 residues: Dephospho-CoA kinase (197 aa).

Positions 2–197 (IIGITGGIAS…SALLLLANPR (196 aa)) constitute a DPCK domain. Residue 10–15 (ASGKST) participates in ATP binding.

The protein belongs to the CoaE family.

The protein localises to the cytoplasm. It carries out the reaction 3'-dephospho-CoA + ATP = ADP + CoA + H(+). The protein operates within cofactor biosynthesis; coenzyme A biosynthesis; CoA from (R)-pantothenate: step 5/5. Catalyzes the phosphorylation of the 3'-hydroxyl group of dephosphocoenzyme A to form coenzyme A. This chain is Dephospho-CoA kinase, found in Streptococcus pyogenes serotype M1.